Reading from the N-terminus, the 282-residue chain is Aminoglycoside 6-adenylyltransferase (282 aa).

It catalyses the reaction streptomycin + ATP = 6-O-adenylylstreptomycin + diphosphate. In terms of biological role, required for streptomycin resistance. Adenylates streptomycin on the O-6 residue. The protein is Aminoglycoside 6-adenylyltransferase of Staphylococcus aureus.